A 391-amino-acid polypeptide reads, in one-letter code: Phosphoglycerate kinase (391 aa).

Substrate-binding positions include aspartate 21–asparagine 23, arginine 36, histidine 59–arginine 62, arginine 113, and arginine 146. ATP contacts are provided by residues lysine 197, glutamate 319, and glycine 345–threonine 348.

Belongs to the phosphoglycerate kinase family. As to quaternary structure, monomer.

Its subcellular location is the cytoplasm. The enzyme catalyses (2R)-3-phosphoglycerate + ATP = (2R)-3-phospho-glyceroyl phosphate + ADP. The protein operates within carbohydrate degradation; glycolysis; pyruvate from D-glyceraldehyde 3-phosphate: step 2/5. The chain is Phosphoglycerate kinase from Xylella fastidiosa (strain Temecula1 / ATCC 700964).